A 411-amino-acid chain; its full sequence is Arginine deiminase (411 aa).

The active-site Amidino-cysteine intermediate is Cys401.

Belongs to the arginine deiminase family.

The protein localises to the cytoplasm. It carries out the reaction L-arginine + H2O = L-citrulline + NH4(+). Its pathway is amino-acid degradation; L-arginine degradation via ADI pathway; carbamoyl phosphate from L-arginine: step 1/2. The protein is Arginine deiminase of Staphylococcus haemolyticus (strain JCSC1435).